Reading from the N-terminus, the 102-residue chain is Small integral membrane protein 29 (102 aa).

N-linked (GlcNAc...) asparagine glycosylation is present at N3. A helical transmembrane segment spans residues 21-41; the sequence is VLGPFFLITLVGVVVAVVMYV.

In terms of tissue distribution, expressed in spleen, thymus, prostate, testis, uterus, small intestine, colon and peripheral blood leukocytes.

The protein resides in the membrane. The polypeptide is Small integral membrane protein 29 (Homo sapiens (Human)).